We begin with the raw amino-acid sequence, 150 residues long: Suppressor of HU sensitivity involved in recombination protein 1 (150 aa).

In terms of assembly, component of the SHU complex composed of at least CSM2, PSY3, SHU1 and SHU2.

The protein resides in the nucleus. Its function is as follows. Plays a role in a RAD51/RAD54-dependent homologous recombination repair (HRR) pathway to repair MMS-induced lesions during S-phase. The chain is Suppressor of HU sensitivity involved in recombination protein 1 (SHU1) from Saccharomyces cerevisiae (strain ATCC 204508 / S288c) (Baker's yeast).